The sequence spans 192 residues: Imidazoleglycerol-phosphate dehydratase (192 aa).

This sequence belongs to the imidazoleglycerol-phosphate dehydratase family.

The protein localises to the cytoplasm. The enzyme catalyses D-erythro-1-(imidazol-4-yl)glycerol 3-phosphate = 3-(imidazol-4-yl)-2-oxopropyl phosphate + H2O. It participates in amino-acid biosynthesis; L-histidine biosynthesis; L-histidine from 5-phospho-alpha-D-ribose 1-diphosphate: step 6/9. In Staphylococcus aureus (strain MRSA252), this protein is Imidazoleglycerol-phosphate dehydratase.